The chain runs to 130 residues: Con-Ins G2 (130 aa).

A signal peptide spans 1–24 (MTTSSYFLLVALGLLLYVRQSFST). Cystine bridges form between Cys-29/Cys-100, Cys-41/Cys-103, Cys-53/Cys-116, and Cys-102/Cys-107. Pro-34 is subject to 4-hydroxyproline; partial. A disordered region spans residues 54–74 (EEEEARRGGTNDGGKKRRRAS). The propeptide at 59 to 92 (RRGGTNDGGKKRRRASPLWKRRRFLSMLKARAKR) is c peptide. 4-carboxyglutamate; partial is present on Glu-111.

It belongs to the insulin family. In terms of assembly, heterodimer of A and B chains; disulfide-linked. As to expression, expressed by the venom gland.

The protein resides in the secreted. Its function is as follows. This venom insulin, from a fish-hunting cone snail, facilitates prey capture by rapidly inducing hypoglycemic shock. Intraperitoneal injection of this peptide into zebrafish lowers blood glucose with the same potency than human insulin. In vivo, when applied to water, this peptide reduces overall locomotor activity of zebrafish larvae, observed as a significant decrease in the percentage of time spent swimming and movement frequency. The sequence is that of Con-Ins G2 from Conus geographus (Geography cone).